Reading from the N-terminus, the 319-residue chain is tRNA-modifying protein YgfZ (319 aa).

Folate contacts are provided by Trp-27 and Trp-189.

Belongs to the tRNA-modifying YgfZ family.

The protein resides in the cytoplasm. Folate-binding protein involved in regulating the level of ATP-DnaA and in the modification of some tRNAs. It is probably a key factor in regulatory networks that act via tRNA modification, such as initiation of chromosomal replication. In Buchnera aphidicola subsp. Schizaphis graminum (strain Sg), this protein is tRNA-modifying protein YgfZ.